We begin with the raw amino-acid sequence, 357 residues long: Protein RecA (357 aa).

Residue 67-74 (GPESSGKT) coordinates ATP. The disordered stretch occupies residues 334-357 (ELKPAAAGNSHDEDELAGEGKEEF).

This sequence belongs to the RecA family.

The protein localises to the cytoplasm. Functionally, can catalyze the hydrolysis of ATP in the presence of single-stranded DNA, the ATP-dependent uptake of single-stranded DNA by duplex DNA, and the ATP-dependent hybridization of homologous single-stranded DNAs. It interacts with LexA causing its activation and leading to its autocatalytic cleavage. The chain is Protein RecA from Pectobacterium atrosepticum (strain SCRI 1043 / ATCC BAA-672) (Erwinia carotovora subsp. atroseptica).